A 355-amino-acid polypeptide reads, in one-letter code: MSKKLLIMAGGTGGHVFPAIAVAQELQKQGWQICWLGTKDRMEAELVPQYNIPIEFIQISGLKGKGVLALIKAPFTILKAVLQALNIIKKYRPDAVLGMGGYVSGPGGIAARLCNVPIVLHEQNAIAGLTNVWLAKIAKRVLQAFPTAFAKAETVGNPVRKDLSELLDPAQRFKARATAEPYPLNILVMGGSQGARIINQTIPEVAKALGNAIFIRHQAGKGNLRTISDVYKQADNVSVTEFIDDMAEAYNWADLVICRSGALTVCEIAAAGLPAIFVPYQHKDRQQYLNATYLANVGAAIIVEQPDFTAENLLNILQPLIKDRQKLTEMAIKAHTKATPKAAQRVAEVIIEVSK.

UDP-N-acetyl-alpha-D-glucosamine is bound by residues 12-14, Asn124, Arg160, Ser192, Ile243, 262-267, and Gln287; these read TGG and ALTVCE.

Belongs to the glycosyltransferase 28 family. MurG subfamily.

It localises to the cell inner membrane. The enzyme catalyses di-trans,octa-cis-undecaprenyl diphospho-N-acetyl-alpha-D-muramoyl-L-alanyl-D-glutamyl-meso-2,6-diaminopimeloyl-D-alanyl-D-alanine + UDP-N-acetyl-alpha-D-glucosamine = di-trans,octa-cis-undecaprenyl diphospho-[N-acetyl-alpha-D-glucosaminyl-(1-&gt;4)]-N-acetyl-alpha-D-muramoyl-L-alanyl-D-glutamyl-meso-2,6-diaminopimeloyl-D-alanyl-D-alanine + UDP + H(+). It participates in cell wall biogenesis; peptidoglycan biosynthesis. Functionally, cell wall formation. Catalyzes the transfer of a GlcNAc subunit on undecaprenyl-pyrophosphoryl-MurNAc-pentapeptide (lipid intermediate I) to form undecaprenyl-pyrophosphoryl-MurNAc-(pentapeptide)GlcNAc (lipid intermediate II). The sequence is that of UDP-N-acetylglucosamine--N-acetylmuramyl-(pentapeptide) pyrophosphoryl-undecaprenol N-acetylglucosamine transferase from Haemophilus ducreyi (strain 35000HP / ATCC 700724).